Reading from the N-terminus, the 204-residue chain is UPF0637 protein SAS1041 (204 aa).

Belongs to the UPF0637 family.

This is UPF0637 protein SAS1041 from Staphylococcus aureus (strain MSSA476).